The sequence spans 1392 residues: Condensin complex subunit 1 (1392 aa).

The segment at 1-593 (MSPHNFEFHL…TGSKDSPSVP (593 aa)) is interaction with SMC2 and SMC4. Ser20 and Ser575 each carry phosphoserine. Disordered stretches follow at residues 569–602 (EAST…QSND), 945–966 (REEQ…ETTM), and 1293–1392 (FETG…RHRS). Residues 945–960 (REEQEHRAKEPKEKTA) show a composition bias toward basic and acidic residues. 4 positions are modified to phosphoserine: Ser1300, Ser1305, Ser1320, and Ser1323. The residue at position 1329 (Thr1329) is a Phosphothreonine. The Bipartite nuclear localization signal signature appears at 1332 to 1353 (PRRTKPGRPQTQQRKKSQRKAK). Basic residues predominate over residues 1344–1353 (QRKKSQRKAK). Phosphoserine occurs at positions 1358, 1361, 1362, and 1367. Positions 1360 to 1373 (ESSEDELSAEMTEE) are enriched in acidic residues. Phosphothreonine; by CDK1 is present on residues Thr1375 and Thr1380. Ser1386 carries the post-translational modification Phosphoserine.

It belongs to the CND1 (condensin subunit 1) family. Component of the condensin complex, which contains the SMC2 and SMC4 heterodimer, and three non SMC subunits that probably regulate the complex: NCAPH/BRRN1, NCAPD2/CAPD2 and NCAPG. Interacts with histones H1 and H3. Post-translationally, phosphorylated by CDK1. Its phosphorylation, as well as that of NCAPH and NCAPG subunits, activates the condensin complex and is required for chromosome condensation.

The protein resides in the nucleus. The protein localises to the cytoplasm. It is found in the chromosome. Functionally, regulatory subunit of the condensin complex, a complex required for conversion of interphase chromatin into mitotic-like condense chromosomes. The condensin complex probably introduces positive supercoils into relaxed DNA in the presence of type I topoisomerases and converts nicked DNA into positive knotted forms in the presence of type II topoisomerases. May target the condensin complex to DNA via its C-terminal domain. May promote the resolution of double-strand DNA catenanes (intertwines) between sister chromatids. Condensin-mediated compaction likely increases tension in catenated sister chromatids, providing directionality for type II topoisomerase-mediated strand exchanges toward chromatid decatenation. Required for decatenation of non-centromeric ultrafine DNA bridges during anaphase. Early in neurogenesis, may play an essential role to ensure accurate mitotic chromosome condensation in neuron stem cells, ultimately affecting neuron pool and cortex size. In Mus musculus (Mouse), this protein is Condensin complex subunit 1 (Ncapd2).